Reading from the N-terminus, the 553-residue chain is Arginine--tRNA ligase (553 aa).

Residues 130–140 carry the 'HIGH' region motif; the sequence is ANPTGPVHLGG.

It belongs to the class-I aminoacyl-tRNA synthetase family. In terms of assembly, monomer.

Its subcellular location is the cytoplasm. It carries out the reaction tRNA(Arg) + L-arginine + ATP = L-arginyl-tRNA(Arg) + AMP + diphosphate. The sequence is that of Arginine--tRNA ligase from Saccharopolyspora erythraea (strain ATCC 11635 / DSM 40517 / JCM 4748 / NBRC 13426 / NCIMB 8594 / NRRL 2338).